We begin with the raw amino-acid sequence, 41 residues long: Pi-stichotoxin-Hcr5a (41 aa).

3 disulfides stabilise this stretch: cysteine 4–cysteine 37, cysteine 6–cysteine 30, and cysteine 20–cysteine 38.

This sequence belongs to the sea anemone type 3 (BDS) potassium channel toxin family.

It is found in the secreted. The protein localises to the nematocyst. Its function is as follows. Weakly inhibits human homomeric ASIC3 (IC(50)=5.5 uM). The protein is Pi-stichotoxin-Hcr5a of Radianthus crispa (Leathery sea anemone).